A 283-amino-acid chain; its full sequence is MHLLQEPVNKLKFFHALVAGGVAGMVVDIALFPIDTVKTRLQSELGFWRAGGFRGIYKGLAPAAAGSAPTAALFFCTYECGKQFLSSVTQTKDSPYVHMAAASAAEVLACLIRVPVEIAKQRSQTLQGNKQSGLQILLRAYRTEGLKRGLYRGFGSTIMREIPFSLIQFPLWEYFKLQWTPLTGFDSTPFSVALCGAVAGGISAGLTTPLDVVKTRIMLAERESLNRRRSARRILHGIYLERGFSGLFAGFVPRVLWITLGGAFFFGFYDLTTRILGATSTDH.

3 Solcar repeats span residues 11-84 (LKFF…GKQF), 93-178 (DSPY…FKLQ), and 187-275 (STPF…TTRI). 6 helical membrane-spanning segments follow: residues 14–34 (FHALVAGGVAGMVVDIALFPI), 55–75 (GIYKGLAPAAAGSAPTAALFF), 99–119 (MAAASAAEVLACLIRVPVEIA), 152–172 (RGFGSTIMREIPFSLIQFPLW), 190–210 (FSVALCGAVAGGISAGLTTPL), and 248–268 (FAGFVPRVLWITLGGAFFFGF).

The protein belongs to the mitochondrial carrier (TC 2.A.29) family.

It is found in the mitochondrion inner membrane. Mitochondrial solute carriers shuttle metabolites, nucleotides, and cofactors through the mitochondrial inner membrane. May mediate the transport of S-adenosylmethionine (SAM) into the mitochondria. This Drosophila melanogaster (Fruit fly) protein is S-adenosylmethionine mitochondrial carrier protein homolog.